Here is a 226-residue protein sequence, read N- to C-terminus: MGALRKAGVWLGLVEEDDERAYDDAGYDKGGYRESRYRSSRYSEDFGDEDDEDEEAAVPRSRRGDRSRLERAAARSGDVDHNVEGEQPERVERASVRSITRSAEPSESLTYHTRDNLALAPQPVRERVPADEEQRYQITTLHPTTYREARTIGEHFRDGVPVIINLTEMDEADARRLVDFAAGLAFGLRGTIERVTNRVFLLSPANVQVTAEDKAKIAEGGFFSLS.

The tract at residues 20 to 116 (RAYDDAGYDK…ESLTYHTRDN (97 aa)) is disordered. A compositionally biased stretch (basic and acidic residues) spans 22–44 (YDDAGYDKGGYRESRYRSSRYSE). Residues 45-56 (DFGDEDDEDEEA) are compositionally biased toward acidic residues. Residues 62–95 (RRGDRSRLERAAARSGDVDHNVEGEQPERVERAS) are compositionally biased toward basic and acidic residues. Over residues 97–111 (RSITRSAEPSESLTY) the composition is skewed to polar residues.

Belongs to the SepF family. As to quaternary structure, homodimer. Interacts with FtsZ.

It is found in the cytoplasm. In terms of biological role, cell division protein that is part of the divisome complex and is recruited early to the Z-ring. Probably stimulates Z-ring formation, perhaps through the cross-linking of FtsZ protofilaments. Its function overlaps with FtsA. The protein is Cell division protein SepF of Salinispora arenicola (strain CNS-205).